Consider the following 1544-residue polypeptide: GATOR complex protein Iml1 (1544 aa).

2 disordered regions span residues 615 to 649 (QAVP…CENG) and 1037 to 1072 (RRHS…EKRP). 2 stretches are compositionally biased toward polar residues: residues 623–639 (QAGQ…NNNN) and 1041–1057 (TSII…TNSP). Residues 1058–1072 (FRERVGSNRLPEKRP) are compositionally biased toward basic and acidic residues.

It belongs to the IML1 family. In terms of assembly, component of the GATOR complex consisting of mio, Nup44A/Seh1, Im11, Nplr3, Nplr2, Wdr24, Wdr59 and Sec13. Within the GATOR complex, probable component of the GATOR1 subcomplex which is likely composed of Iml1, Nplr2 and Nplr3.

Functionally, an essential component of the GATOR subcomplex GATOR1 which functions as an inhibitor of the amino acid-sensing branch of the TORC1 signaling pathway. The two GATOR subcomplexes, GATOR1 and GATOR2, regulate the TORC1 pathway in order to mediate metabolic homeostasis, female gametogenesis and the response to amino acid limitation and complete starvation. The function of GATOR1 in negatively regulating the TORC1 pathway is essential for maintaining baseline levels of TORC1 activity under nutrient rich conditions, and for promoting survival during amino acid or complete starvation by inhibiting TORC1-dependent cell growth and promoting catabolic metabolism and autophagy. GATOR1 and GATOR2 act at different stages of oogenesis to regulate TORC1 in order to control meiotic entry and promote oocyte growth and development. After exactly four mitotic cyst divisions, the GATOR1 complex members (Iml1, Nprl2 and Nprl3) down-regulate TORC1 to slow cellular metabolism and promote the mitotic/meiotic transition. At later stages of oogenesis, the mio and Nup44A components of the GATOR2 complex inhibit GATOR1 and thus activate TORC1 to promote meiotic progression, and drive oocyte growth and development. The polypeptide is GATOR complex protein Iml1 (Drosophila melanogaster (Fruit fly)).